Here is a 183-residue protein sequence, read N- to C-terminus: Peptidyl-tRNA hydrolase (183 aa).

A tRNA-binding site is contributed by Tyr14. His19 (proton acceptor) is an active-site residue. Residues Tyr61, Asn63, and Asn109 each coordinate tRNA.

The protein belongs to the PTH family. In terms of assembly, monomer.

Its subcellular location is the cytoplasm. It carries out the reaction an N-acyl-L-alpha-aminoacyl-tRNA + H2O = an N-acyl-L-amino acid + a tRNA + H(+). In terms of biological role, hydrolyzes ribosome-free peptidyl-tRNAs (with 1 or more amino acids incorporated), which drop off the ribosome during protein synthesis, or as a result of ribosome stalling. Its function is as follows. Catalyzes the release of premature peptidyl moieties from peptidyl-tRNA molecules trapped in stalled 50S ribosomal subunits, and thus maintains levels of free tRNAs and 50S ribosomes. The sequence is that of Peptidyl-tRNA hydrolase from Aliarcobacter butzleri (strain RM4018) (Arcobacter butzleri).